A 259-amino-acid chain; its full sequence is Snake venom serine protease homolog rhinocerase 3 (259 aa).

The first 17 residues, 1-17 (VLIRVLANLLLLQLSYA), serve as a signal peptide directing secretion. A propeptide spanning residues 18–23 (QESSEL) is cleaved from the precursor. The Peptidase S1 domain maps to 24-250 (VIGGDECDIN…YTDWIEGIIA (227 aa)). Intrachain disulfides connect cysteine 30-cysteine 164, cysteine 51-cysteine 67, cysteine 99-cysteine 257, cysteine 143-cysteine 211, cysteine 175-cysteine 190, and cysteine 201-cysteine 226. Asparagine 80 carries an N-linked (GlcNAc...) asparagine glycan. N-linked (GlcNAc...) asparagine glycosylation occurs at asparagine 252.

It belongs to the peptidase S1 family. Snake venom subfamily. As to expression, expressed by the venom gland.

It localises to the secreted. Functionally, snake venom serine protease homolog that may act in the hemostasis system of the prey. In Bitis rhinoceros (West African gaboon viper), this protein is Snake venom serine protease homolog rhinocerase 3.